The chain runs to 60 residues: Ribosome biogenesis protein Nop10 (60 aa).

Residues 29–60 (CDGPTENSAPAPFSPEDPYGEYRRRVRRRASE) form a disordered region.

The protein belongs to the NOP10 family.

Its function is as follows. Involved in ribosome biogenesis; more specifically in 18S rRNA pseudouridylation and in cleavage of pre-rRNA. In Halorubrum lacusprofundi (strain ATCC 49239 / DSM 5036 / JCM 8891 / ACAM 34), this protein is Ribosome biogenesis protein Nop10.